We begin with the raw amino-acid sequence, 184 residues long: Inosine triphosphate pyrophosphatase (184 aa).

ITP is bound at residue 10–15; it reads TGNANK. Glu-38 contributes to the Mg(2+) binding site. ITP-binding positions include Lys-50, 66–67, Lys-83, 142–145, Lys-163, and 168–169; these read DT, FGWD, and HR.

The protein belongs to the HAM1 NTPase family. As to quaternary structure, homodimer. Requires Mg(2+) as cofactor. Mn(2+) serves as cofactor.

It localises to the cytoplasm. Its subcellular location is the nucleus. It carries out the reaction ITP + H2O = IMP + diphosphate + H(+). The catalysed reaction is dITP + H2O = dIMP + diphosphate + H(+). It catalyses the reaction XTP + H2O = XMP + diphosphate + H(+). Pyrophosphatase that hydrolyzes non-canonical purine nucleotides such as inosine triphosphate (ITP), deoxyinosine triphosphate (dITP) or xanthosine 5'-triphosphate (XTP) to their respective monophosphate derivatives. The enzyme does not distinguish between the deoxy- and ribose forms. Probably excludes non-canonical purines from RNA and DNA precursor pools, thus preventing their incorporation into RNA and DNA and avoiding chromosomal lesions. The sequence is that of Inosine triphosphate pyrophosphatase from Fusarium vanettenii (strain ATCC MYA-4622 / CBS 123669 / FGSC 9596 / NRRL 45880 / 77-13-4) (Fusarium solani subsp. pisi).